We begin with the raw amino-acid sequence, 772 residues long: 5-methyltetrahydropteroyltriglutamate--homocysteine methyltransferase (772 aa).

5-methyltetrahydropteroyltri-L-glutamate contacts are provided by residues 24–27 and Lys-120; that span reads RELK. Residues 446–448 and Glu-499 each bind L-homocysteine; that span reads IGS. L-methionine contacts are provided by residues 446–448 and Glu-499; that span reads IGS. Trp-576 is a 5-methyltetrahydropteroyltri-L-glutamate binding site. Asp-614 contributes to the L-homocysteine binding site. Asp-614 provides a ligand contact to L-methionine. Glu-620 provides a ligand contact to 5-methyltetrahydropteroyltri-L-glutamate. The Zn(2+) site is built by His-656, Cys-658, and Glu-680. His-709 functions as the Proton donor in the catalytic mechanism. Residue Cys-741 participates in Zn(2+) binding.

Belongs to the vitamin-B12 independent methionine synthase family. Zn(2+) is required as a cofactor.

The enzyme catalyses 5-methyltetrahydropteroyltri-L-glutamate + L-homocysteine = tetrahydropteroyltri-L-glutamate + L-methionine. The protein operates within amino-acid biosynthesis; L-methionine biosynthesis via de novo pathway; L-methionine from L-homocysteine (MetE route): step 1/1. Functionally, catalyzes the transfer of a methyl group from 5-methyltetrahydrofolate to homocysteine resulting in methionine formation. This chain is 5-methyltetrahydropteroyltriglutamate--homocysteine methyltransferase, found in Streptomyces coelicolor (strain ATCC BAA-471 / A3(2) / M145).